Here is a 200-residue protein sequence, read N- to C-terminus: Casparian strip membrane protein 1 (200 aa).

The Cytoplasmic portion of the chain corresponds to 1 to 38 (MKSGDHAAIDVPESSAVAKGKAPLIATPREQKSGFKKG). Residues 39-59 (LGIFDFLLRLGAIIAALAAAA) form a helical membrane-spanning segment. Over 60–86 (TMGTSDETLPFFTQFFQFEASYDDLPT) the chain is Extracellular. Residues 87–107 (FMFFVIAMALIGGYLVLSLPF) traverse the membrane as a helical segment. Over 108–121 (SIVTIVRPHAVAPR) the chain is Cytoplasmic. A helical transmembrane segment spans residues 122-142 (LLLFILDIVALTLTTAAGAAA). The Extracellular segment spans residues 143–171 (AAIVYLAHNGNPNTNWLAICQQFGDFCQE). Residues 172–192 (VSGAVVASFVTVVVLMSLVLL) traverse the membrane as a helical segment. At 193–200 (SGVALKKH) the chain is on the cytoplasmic side.

Belongs to the Casparian strip membrane proteins (CASP) family. As to quaternary structure, homodimer and heterodimers.

The protein resides in the cell membrane. Its function is as follows. Regulates membrane-cell wall junctions and localized cell wall deposition. Required for establishment of the Casparian strip membrane domain (CSD) and the subsequent formation of Casparian strips, a cell wall modification of the root endodermis that determines an apoplastic barrier between the intraorganismal apoplasm and the extraorganismal apoplasm and prevents lateral diffusion. The protein is Casparian strip membrane protein 1 of Theobroma cacao (Cacao).